A 261-amino-acid polypeptide reads, in one-letter code: Indole-3-glycerol phosphate synthase (261 aa).

It belongs to the TrpC family.

It catalyses the reaction 1-(2-carboxyphenylamino)-1-deoxy-D-ribulose 5-phosphate + H(+) = (1S,2R)-1-C-(indol-3-yl)glycerol 3-phosphate + CO2 + H2O. It participates in amino-acid biosynthesis; L-tryptophan biosynthesis; L-tryptophan from chorismate: step 4/5. The protein is Indole-3-glycerol phosphate synthase of Burkholderia ambifaria (strain ATCC BAA-244 / DSM 16087 / CCUG 44356 / LMG 19182 / AMMD) (Burkholderia cepacia (strain AMMD)).